The sequence spans 160 residues: Major strawberry allergen Fra a 1-E (160 aa).

Belongs to the BetVI family. In terms of assembly, monomer. Interacts with AP. Highly expressed in roots. Expressed in open flowers. Expressed at low levels in leaves, flower buds and fruits.

In terms of biological role, involved in the control of flavonoid biosynthesis in fruits, probably by binding directly to natural flavonoids. Binds the natural flavonoid quercetin-3-O-glucuronide with affinities in the low micromolar range. In Fragaria ananassa (Strawberry), this protein is Major strawberry allergen Fra a 1-E.